The chain runs to 428 residues: Chaperone SurA (428 aa).

The N-terminal stretch at methionine 1–alanine 13 is a signal peptide. PpiC domains lie at serine 164–glutamate 265 and arginine 276–glycine 375.

The protein resides in the periplasm. It catalyses the reaction [protein]-peptidylproline (omega=180) = [protein]-peptidylproline (omega=0). Chaperone involved in the correct folding and assembly of outer membrane proteins. Recognizes specific patterns of aromatic residues and the orientation of their side chains, which are found more frequently in integral outer membrane proteins. May act in both early periplasmic and late outer membrane-associated steps of protein maturation. In Pseudomonas savastanoi pv. phaseolicola (strain 1448A / Race 6) (Pseudomonas syringae pv. phaseolicola (strain 1448A / Race 6)), this protein is Chaperone SurA.